A 360-amino-acid polypeptide reads, in one-letter code: A-type ATP synthase subunit C (360 aa).

A disordered region spans residues 1–23; it reads MRLLERLWGKKPSRKSDKKKKGT. The segment covering 9 to 22 has biased composition (basic residues); the sequence is GKKPSRKSDKKKKG.

The protein belongs to the V-ATPase V0D/AC39 subunit family. Has multiple subunits with at least A(3), B(3), C, D, E, F, H, I and proteolipid K(x).

It localises to the cell membrane. Component of the A-type ATP synthase that produces ATP from ADP in the presence of a proton gradient across the membrane. This Methanosarcina acetivorans (strain ATCC 35395 / DSM 2834 / JCM 12185 / C2A) protein is A-type ATP synthase subunit C.